A 122-amino-acid polypeptide reads, in one-letter code: Protein FAM223B (122 aa).

This sequence belongs to the FAM223 family.

This Homo sapiens (Human) protein is Protein FAM223B (FAM223B).